A 433-amino-acid chain; its full sequence is GTPase Der (433 aa).

2 consecutive EngA-type G domains span residues 5–167 (KKVL…GEAN) and 174–349 (IKVG…DQLE). Residues 11-18 (GRPNVGKS), 58-62 (DTGGF), 119-122 (NKVD), 180-187 (GKPNSGKS), 227-231 (DTAGI), and 292-295 (SKWD) contribute to the GTP site. The KH-like domain occupies 350–429 (FKTSTPDLNK…PILVELREKI (80 aa)).

It belongs to the TRAFAC class TrmE-Era-EngA-EngB-Septin-like GTPase superfamily. EngA (Der) GTPase family. As to quaternary structure, associates with the 50S ribosomal subunit.

In terms of biological role, GTPase that plays an essential role in the late steps of ribosome biogenesis. In Borreliella afzelii (strain PKo) (Borrelia afzelii), this protein is GTPase Der.